Here is a 240-residue protein sequence, read N- to C-terminus: UDP-2,3-diacylglucosamine hydrolase (240 aa).

Residues aspartate 8, histidine 10, aspartate 41, asparagine 79, and histidine 114 each coordinate Mn(2+). A substrate-binding site is contributed by 79–80; it reads NR. Substrate is bound by residues aspartate 122, serine 160, asparagine 164, lysine 167, and histidine 195. Residues histidine 195 and histidine 197 each coordinate Mn(2+).

Belongs to the LpxH family. Mn(2+) serves as cofactor.

The protein localises to the cell inner membrane. The enzyme catalyses UDP-2-N,3-O-bis[(3R)-3-hydroxytetradecanoyl]-alpha-D-glucosamine + H2O = 2-N,3-O-bis[(3R)-3-hydroxytetradecanoyl]-alpha-D-glucosaminyl 1-phosphate + UMP + 2 H(+). It functions in the pathway glycolipid biosynthesis; lipid IV(A) biosynthesis; lipid IV(A) from (3R)-3-hydroxytetradecanoyl-[acyl-carrier-protein] and UDP-N-acetyl-alpha-D-glucosamine: step 4/6. In terms of biological role, hydrolyzes the pyrophosphate bond of UDP-2,3-diacylglucosamine to yield 2,3-diacylglucosamine 1-phosphate (lipid X) and UMP by catalyzing the attack of water at the alpha-P atom. Involved in the biosynthesis of lipid A, a phosphorylated glycolipid that anchors the lipopolysaccharide to the outer membrane of the cell. The chain is UDP-2,3-diacylglucosamine hydrolase from Salmonella paratyphi A (strain ATCC 9150 / SARB42).